Here is a 212-residue protein sequence, read N- to C-terminus: Guanylate kinase (212 aa).

A Guanylate kinase-like domain is found at 5–187; that stretch reads GILCIISAPS…ALMHLQSIML (183 aa). 12–19 contacts ATP; sequence APSGTGKS.

It belongs to the guanylate kinase family.

It localises to the cytoplasm. The catalysed reaction is GMP + ATP = GDP + ADP. Essential for recycling GMP and indirectly, cGMP. The sequence is that of Guanylate kinase from Blochmanniella pennsylvanica (strain BPEN).